The sequence spans 157 residues: Small ribosomal subunit protein uS7 (157 aa).

This sequence belongs to the universal ribosomal protein uS7 family. Part of the 30S ribosomal subunit. Contacts proteins S9 and S11.

In terms of biological role, one of the primary rRNA binding proteins, it binds directly to 16S rRNA where it nucleates assembly of the head domain of the 30S subunit. Is located at the subunit interface close to the decoding center, probably blocks exit of the E-site tRNA. This chain is Small ribosomal subunit protein uS7, found in Borrelia hermsii (strain HS1 / DAH).